We begin with the raw amino-acid sequence, 542 residues long: Leucine-rich repeat-containing protein 56 (542 aa).

LRR repeat units follow at residues 94 to 115 (NLDQ…GTSL), 117 to 138 (HLQV…ASLP), 139 to 160 (ALKE…CLLE), 161 to 182 (QLEV…RYLQ), and 186 to 206 (RLAM…PGPT). The LRRCT domain maps to 207–250 (NKVPRGYNYRAEVRKLIPQLQVLDEVPAAHTGPPAPPRLSQDWL). Disordered stretches follow at residues 308–377 (LLSE…ADSS), 396–475 (LPYR…LQSR), and 507–542 (RLSP…PVPT). Residues 416-426 (RVPEEQVHQAE) are compositionally biased toward basic and acidic residues. Positions 522–532 (PDAAARPPRAA) are enriched in low complexity.

The protein belongs to the LRRC56 family. As to quaternary structure, interacts with IFT88.

It localises to the cell projection. The protein localises to the cilium. In terms of biological role, required for the assembly of dynein arms. The polypeptide is Leucine-rich repeat-containing protein 56 (LRRC56) (Homo sapiens (Human)).